The following is a 197-amino-acid chain: Probable GTP-binding protein EngB (197 aa).

The region spanning 22–195 is the EngB-type G domain; the sequence is NLPEIAFVGR…VDYLFDDLVE (174 aa). GTP-binding positions include 30 to 37, 57 to 61, 75 to 78, 142 to 145, and 174 to 176; these read GRSNVGKS, GKTRL, DLPG, TKSD, and FSS. Mg(2+) is bound by residues Ser37 and Thr59.

It belongs to the TRAFAC class TrmE-Era-EngA-EngB-Septin-like GTPase superfamily. EngB GTPase family. Mg(2+) is required as a cofactor.

In terms of biological role, necessary for normal cell division and for the maintenance of normal septation. This is Probable GTP-binding protein EngB from Clostridium perfringens (strain 13 / Type A).